A 796-amino-acid polypeptide reads, in one-letter code: RNA cytosine-C(5)-methyltransferase NSUN2 (796 aa).

Positions 1-11 (MGRRARDRRRQ) are enriched in basic residues. The interval 1-36 (MGRRARDRRRQLQPQQRRERSGGGGGGGDDQAGWAG) is disordered. Over residues 22 to 36 (GGGGGGGDDQAGWAG) the composition is skewed to gly residues. S-adenosyl-L-methionine-binding positions include 184 to 190 (CAAPGSK), aspartate 215, aspartate 242, and aspartate 268. Catalysis depends on cysteine 321, which acts as the Nucleophile. Disordered stretches follow at residues 435 to 501 (WNKR…CGPP) and 707 to 796 (RKEG…NVKD). 3 stretches are compositionally biased toward basic and acidic residues: residues 467-483 (ATEK…KKVQ), 708-721 (KEGE…EEVQ), and 733-746 (VEDK…KMEA). Over residues 774-783 (CSKNTNSHIN) the composition is skewed to polar residues. Positions 784–796 (QESKDMNTNNVKD) are enriched in basic and acidic residues.

This sequence belongs to the class I-like SAM-binding methyltransferase superfamily. RsmB/NOP family. TRM4 subfamily.

The protein resides in the nucleus. It localises to the nucleolus. Its subcellular location is the cytoplasm. It is found in the mitochondrion. The protein localises to the cytoskeleton. The protein resides in the spindle. It localises to the secreted. Its subcellular location is the extracellular exosome. The enzyme catalyses cytidine(48) in tRNA + S-adenosyl-L-methionine = 5-methylcytidine(48) in tRNA + S-adenosyl-L-homocysteine + H(+). It carries out the reaction cytidine(49) in tRNA + S-adenosyl-L-methionine = 5-methylcytidine(49) in tRNA + S-adenosyl-L-homocysteine + H(+). The catalysed reaction is cytidine(50) in tRNA + S-adenosyl-L-methionine = 5-methylcytidine(50) in tRNA + S-adenosyl-L-homocysteine + H(+). It catalyses the reaction cytidine(34) in tRNA precursor + S-adenosyl-L-methionine = 5-methylcytidine(34) in tRNA precursor + S-adenosyl-L-homocysteine + H(+). The enzyme catalyses a cytidine in mRNA + S-adenosyl-L-methionine = a 5-methylcytidine in mRNA + S-adenosyl-L-homocysteine + H(+). In terms of biological role, RNA cytosine C(5)-methyltransferase that methylates cytosine to 5-methylcytosine (m5C) in various RNAs, such as tRNAs, mRNAs and some long non-coding RNAs (lncRNAs). Involved in various processes, such as epidermal stem cell differentiation, testis differentiation and maternal to zygotic transition during early development: acts by increasing protein synthesis; cytosine C(5)-methylation promoting tRNA stability and preventing mRNA decay. Methylates cytosine to 5-methylcytosine (m5C) at positions 34 and 48 of intron-containing tRNA(Leu)(CAA) precursors, and at positions 48, 49 and 50 of tRNA(Gly)(GCC) precursors. tRNA methylation is required generation of RNA fragments derived from tRNAs (tRFs). Also mediates C(5)-methylation of mitochondrial tRNAs. Catalyzes cytosine C(5)-methylation of mRNAs, leading to stabilize them and prevent mRNA decay. Cytosine C(5)-methylation of mRNAs also regulates mRNA export. Also mediates cytosine C(5)-methylation of non-coding RNAs, such as vault RNAs (vtRNAs), promoting their processing into regulatory small RNAs. Required for proper spindle assembly and chromosome segregation, independently of its methyltransferase activity. This chain is RNA cytosine-C(5)-methyltransferase NSUN2, found in Gallus gallus (Chicken).